Here is a 375-residue protein sequence, read N- to C-terminus: Succinyl-diaminopimelate desuccinylase (375 aa).

Residue His66 coordinates Zn(2+). The active site involves Asp68. Residue Asp99 participates in Zn(2+) binding. The active-site Proton acceptor is the Glu133. The Zn(2+) site is built by Glu134, Glu162, and His348.

Belongs to the peptidase M20A family. DapE subfamily. As to quaternary structure, homodimer. Zn(2+) serves as cofactor. Requires Co(2+) as cofactor.

It carries out the reaction N-succinyl-(2S,6S)-2,6-diaminopimelate + H2O = (2S,6S)-2,6-diaminopimelate + succinate. Its pathway is amino-acid biosynthesis; L-lysine biosynthesis via DAP pathway; LL-2,6-diaminopimelate from (S)-tetrahydrodipicolinate (succinylase route): step 3/3. Its function is as follows. Catalyzes the hydrolysis of N-succinyl-L,L-diaminopimelic acid (SDAP), forming succinate and LL-2,6-diaminopimelate (DAP), an intermediate involved in the bacterial biosynthesis of lysine and meso-diaminopimelic acid, an essential component of bacterial cell walls. This is Succinyl-diaminopimelate desuccinylase from Buchnera aphidicola subsp. Acyrthosiphon pisum (strain 5A).